Reading from the N-terminus, the 74-residue chain is Exodeoxyribonuclease 7 small subunit (74 aa).

The protein belongs to the XseB family. In terms of assembly, heterooligomer composed of large and small subunits.

Its subcellular location is the cytoplasm. It catalyses the reaction Exonucleolytic cleavage in either 5'- to 3'- or 3'- to 5'-direction to yield nucleoside 5'-phosphates.. Its function is as follows. Bidirectionally degrades single-stranded DNA into large acid-insoluble oligonucleotides, which are then degraded further into small acid-soluble oligonucleotides. This Haemophilus ducreyi (strain 35000HP / ATCC 700724) protein is Exodeoxyribonuclease 7 small subunit.